A 317-amino-acid chain; its full sequence is Flagellar hook-associated protein 3 (317 aa).

Belongs to the bacterial flagellin family.

The protein resides in the secreted. It is found in the bacterial flagellum. The chain is Flagellar hook-associated protein 3 (flgL) from Salmonella typhimurium (strain LT2 / SGSC1412 / ATCC 700720).